The sequence spans 92 residues: Evasin P675 (92 aa).

Positions 1–24 are cleaved as a signal peptide; the sequence is MEVKTFAFLQIAVIIALGLHLAPA. Intrachain disulfides connect Cys44–Cys63, Cys48–Cys65, and Cys59–Cys76. The N-linked (GlcNAc...) asparagine glycan is linked to Asn47. N-linked (GlcNAc...) asparagine glycosylation occurs at Asn70.

The protein resides in the secreted. Functionally, salivary chemokine-binding protein which binds to host chemokines CXCL1, CXCL2, CXCL3, CXCL4, CXCL5, CXCL6, CXCL10, CXCL11 and CXCL13. This Ixodes ricinus (Common tick) protein is Evasin P675.